The primary structure comprises 2439 residues: Centrosomal protein of 290 kDa (2439 aa).

Coiled-coil stretches lie at residues 75–913 and 1271–1576; these read AEQA…VVTE and NTML…YMDT. Disordered stretches follow at residues 1802-1824, 1867-1890, and 2017-2048; these read ETLN…EKEA, ELDR…KSSK, and ESRL…FQKE. Over residues 2039–2048 the composition is skewed to basic and acidic residues; sequence SQREHEFQKE. A coiled-coil region spans residues 2046-2394; it reads QKENLRLSTE…KLTQELKHFD (349 aa).

As to quaternary structure, part of the tectonic-like complex (also named B9 complex).

The protein localises to the cytoplasm. It localises to the cytoskeleton. It is found in the microtubule organizing center. Its subcellular location is the centrosome. The protein resides in the centriolar satellite. The protein localises to the nucleus. It localises to the cilium basal body. Its function is as follows. Involved in early and late steps in cilia formation. May play a role in early ciliogenesis in the disappearance of centriolar satellites and in the transition of primary ciliar vesicles (PCVs) to capped ciliary vesicles (CCVs). In the ciliary transition zone is part of the tectonic-like complex which is required for tissue-specific ciliogenesis and may regulate ciliary membrane composition. Involved in regulation of the BBSome complex integrity and in ciliary targeting of selected BBSome cargos. Required for the correct localization of ciliary and phototransduction proteins in retinal photoreceptor cells; may play a role in ciliary transport processes. Involved in development of the nervous system and kidney. The sequence is that of Centrosomal protein of 290 kDa (cep290) from Danio rerio (Zebrafish).